We begin with the raw amino-acid sequence, 645 residues long: Rho GTPase-activating protein 25 (645 aa).

The PH domain maps to 46–151 (RPIKMGWLKK…WVKFLRRVAG (106 aa)). The Rho-GAP domain maps to 159–353 (QRLDETVAYE…MMIRDHEVLF (195 aa)). Disordered regions lie at residues 355-444 (KSKD…QTLP) and 469-550 (FWSP…EEEI). 2 positions are modified to phosphoserine: S362 and S395. The span at 393-409 (TDSFSSMTSDSDTTSPT) shows a compositional bias: low complexity. T406 carries the phosphothreonine modification. The span at 420-431 (DSSKVPREKPGD) shows a compositional bias: basic and acidic residues. Polar residues predominate over residues 487–504 (SQDLRQLSDSQRTSTYDN). A Phosphoserine modification is found at S536. The stretch at 541 to 644 (GKKNSGEEEI…VKSMKEPKTE (104 aa)) forms a coiled coil.

In terms of biological role, GTPase activator for the Rho-type GTPases by converting them to an inactive GDP-bound state. The chain is Rho GTPase-activating protein 25 (ARHGAP25) from Homo sapiens (Human).